The following is a 392-amino-acid chain: Succinyl-diaminopimelate desuccinylase (392 aa).

Residue His-78 participates in Zn(2+) binding. Residue Asp-80 is part of the active site. Asp-110 provides a ligand contact to Zn(2+). Residue Glu-145 is the Proton acceptor of the active site. Zn(2+)-binding residues include Glu-146, Glu-174, and His-363.

It belongs to the peptidase M20A family. DapE subfamily. As to quaternary structure, homodimer. Zn(2+) is required as a cofactor. Requires Co(2+) as cofactor.

It catalyses the reaction N-succinyl-(2S,6S)-2,6-diaminopimelate + H2O = (2S,6S)-2,6-diaminopimelate + succinate. The protein operates within amino-acid biosynthesis; L-lysine biosynthesis via DAP pathway; LL-2,6-diaminopimelate from (S)-tetrahydrodipicolinate (succinylase route): step 3/3. Catalyzes the hydrolysis of N-succinyl-L,L-diaminopimelic acid (SDAP), forming succinate and LL-2,6-diaminopimelate (DAP), an intermediate involved in the bacterial biosynthesis of lysine and meso-diaminopimelic acid, an essential component of bacterial cell walls. The sequence is that of Succinyl-diaminopimelate desuccinylase from Methylobacterium radiotolerans (strain ATCC 27329 / DSM 1819 / JCM 2831 / NBRC 15690 / NCIMB 10815 / 0-1).